The following is a 455-amino-acid chain: Cerebellar degeneration-related protein 2 (455 aa).

2 coiled-coil regions span residues 37-141 (LLDR…SSQG) and 191-264 (EEEN…QAEH). Residues 132 to 142 (VEELKSSSQGR) show a composition bias toward polar residues. Residues 132–152 (VEELKSSSQGRGRQKACDQEK) are disordered. Position 310 is a phosphoserine (Ser-310). The interval 395–419 (SEAGASGWEPTPVSPESISSPTTTP) is disordered. The segment covering 403 to 419 (EPTPVSPESISSPTTTP) has biased composition (low complexity).

It belongs to the CDR2 family. As to expression, expressed in brain and testis (at protein level). Expressed in the cerebellum, cerebral cortex, heart, lung, spleen, ovary, kidney and testis.

The protein is Cerebellar degeneration-related protein 2 (Cdr2) of Mus musculus (Mouse).